Here is a 357-residue protein sequence, read N- to C-terminus: Protein-glutamate methylesterase/protein-glutamine glutaminase 1 (357 aa).

The Response regulatory domain maps to 7-124; sequence KVLCVDDSAL…REGLLDYTQT (118 aa). Residue D58 is modified to 4-aspartylphosphate. The CheB-type methylesterase domain occupies 158–350; that stretch reads LLSTEKLIIV…QRVMAHLATF (193 aa). Catalysis depends on residues S170, H196, and D292.

Belongs to the CheB family. In terms of processing, phosphorylated by CheA. Phosphorylation of the N-terminal regulatory domain activates the methylesterase activity.

Its subcellular location is the cytoplasm. The enzyme catalyses [protein]-L-glutamate 5-O-methyl ester + H2O = L-glutamyl-[protein] + methanol + H(+). It catalyses the reaction L-glutaminyl-[protein] + H2O = L-glutamyl-[protein] + NH4(+). Functionally, involved in chemotaxis. Part of a chemotaxis signal transduction system that modulates chemotaxis in response to various stimuli. Catalyzes the demethylation of specific methylglutamate residues introduced into the chemoreceptors (methyl-accepting chemotaxis proteins or MCP) by CheR. Also mediates the irreversible deamidation of specific glutamine residues to glutamic acid. The sequence is that of Protein-glutamate methylesterase/protein-glutamine glutaminase 1 from Cupriavidus metallidurans (strain ATCC 43123 / DSM 2839 / NBRC 102507 / CH34) (Ralstonia metallidurans).